A 960-amino-acid chain; its full sequence is MWRAGRAAVACEVCQSLVKHSSGIQRNVPLQKLHLVSRSIYRSHHPALKLQRPQLRTPFQQFSSLTHLSLHKLKLSPIKYGYQPRRNFWPARLAARLLKLRYIILGSAVGGGYTAKKTFDEWKDMIPDLSDYKWIVPDFIWEIDEYIDLEKIRKALPSSEDLASLAPDLDKITESLSLLKDFFTAGSPGETAFRATDHGSESDKHYRKVSDKEKIDQLQEELLHTQLKYQRILERLEKENKELRKLVLQKDDKGIHHRKLKKSLIDMYSEVLDVLSDYDASYNTQDHLPRVVVVGDQSAGKTSVLEMIAQARIFPRGSGEMMTRSPVKVTLSEGPHHVALFKDSSREFDLTKEEDLAALRHEIELRMRKNVKEGCTVSPETISLNVKGPGLQRMVLVDLPGVINTVTSGMAPDTKETIFSISKAYMQNPNAIILCIQDGSVDAERSIVTDLVSQMDPHGRRTIFVLTKVDLAEKNVASPSRIQQIIEGKLFPMKALGYFAVVTGKGNSSESIEAIREYEEEFFQNSKLLKTSMLKAHQVTTRNLSLAVSDCFWKMVRESVEQQADSFKATRFNLETEWKNNYPRLRELDRNELFEKAKNEILDEVISLSQVTPKHWEEILQQSLWERVSTHVIENIYLPAAQTMNSGTFNTTVDIKLKQWTDKQLPNKAVEVAWETLQEEFSRFMTEPKGKEHDDIFDKLKEAVKEESIKRHKWNDFAEDSLRVIQHNALEDRSISDKQQWDAAIYFMEEALQGRLKDTENAIENMIGPDWKKRWMYWKNRTQEQCVHNETKNELEKMLKVNDEHPAYLASDEITTVRKNLESRGVEVDPSLIKDTWHQVYRRHFLKTALNHCNLCRRGFYYYQRHFIDSELECNDVVLFWRIQRMLAITANTLRQQLTNTEVRRLEKNVKEVLEDFAEDGEKKVKLLTGKRVQLAEDLKKVREIQEKLDAFIEALHQEK.

A mitochondrion-targeting transit peptide spans 1-87 (MWRAGRAAVA…IKYGYQPRRN (87 aa)). At 88–96 (FWPARLAAR) the chain is on the mitochondrial matrix side. A helical transmembrane segment spans residues 97 to 113 (LLKLRYIILGSAVGGGY). Topologically, residues 114 to 770 (TAKKTFDEWK…NAIENMIGPD (657 aa)) are mitochondrial intermembrane. Residues 210–254 (SDKEKIDQLQEELLHTQLKYQRILERLEKENKELRKLVLQKDDKG) adopt a coiled-coil conformation. Residues 217 to 222 (QLQEEL) carry the LQQQIQ motif motif. Lysine 228 carries the N6-acetyllysine modification. The 277-residue stretch at 285–561 (QDHLPRVVVV…FWKMVRESVE (277 aa)) folds into the Dynamin-type G domain. Positions 295 to 302 (GDQSAGKT) are G1 motif. 6 residues coordinate GTP: serine 298, glycine 300, lysine 301, threonine 302, serine 303, and glycine 317. Position 302 (threonine 302) interacts with Mg(2+). A G2 motif region spans residues 321–324 (MMTR). Residues threonine 323 and aspartate 398 each coordinate Mg(2+). Residues 398–401 (DLPG) form a G3 motif region. Residues 467–470 (TKVD) are G4 motif. GTP is bound by residues lysine 468, aspartate 470, and threonine 503. The G5 motif stretch occupies residues 501–504 (VVTG). 2 stalk region regions span residues 589–836 (DRNE…IKDT) and 874–928 (CNDV…VKLL). Residues 736-856 (SDKQQWDAAI…KTALNHCNLC (121 aa)) are paddle region. The stretch at 771–781 (WKKRWMYWKNR) is an intramembrane region. Residues 782 to 960 (TQEQCVHNET…AFIEALHQEK (179 aa)) lie on the Mitochondrial intermembrane side of the membrane. The cysteines at positions 856 and 874 are disulfide-linked. Residues 895–960 (RQQLTNTEVR…AFIEALHQEK (66 aa)) adopt a coiled-coil conformation.

It belongs to the TRAFAC class dynamin-like GTPase superfamily. Dynamin/Fzo/YdjA family. Oligomeric complex consisting of membrane-bound and soluble forms of OPA1. Interacts with RCC1L; RCC1L acts as a guanine nucleotide exchange factor (GEF) for OPA1 by exchanging bound GDP for free GTP. Interacts with CHCHD3 and IMMT; these interactions occur preferentially with soluble OPA1 forms. Interacts with PRELID1. Cleaved by OMA1 or YME1L downstream of the transmembrane region in response to different signals to generate soluble forms. Cleaved by OMA1 at position S1 following stress conditions, generating the short soluble form (Dynamin-like GTPase OPA1, short form; S-OPA1). AFG3L2 is involved in the regulation of OMA1-dependent processing of OPA1. PARL-dependent proteolytic processing releases an antiapoptotic soluble form not required for mitochondrial fusion. In terms of processing, cleavage at position S2 by YME1L is required to mediate oxidative phosphorylation (OXPHOS)-induced mitochondrial fusion. Cleavage occurs in the sequence motif Leu-Gln-Gln-Gln-Ile-Gln (LQQQIQ). Post-translationally, cleavage at position S3 by YME1L is required for membrane tubulation. In terms of tissue distribution, detected in brain (at protein level). Detected in brain, brain stem, heart, kidney, liver and skeletal muscle.

The protein resides in the mitochondrion inner membrane. It is found in the mitochondrion intermembrane space. The enzyme catalyses GTP + H2O = GDP + phosphate + H(+). Its activity is regulated as follows. Activated by guanine nucleotide exchange factor RCC1L. Dynamin-related GTPase that is essential for normal mitochondrial morphology by mediating fusion of the mitochondrial inner membranes, regulating cristae morphology and maintaining respiratory chain function. Exists in two forms: the transmembrane, long form (Dynamin-like GTPase OPA1, long form; L-OPA1), which is tethered to the inner mitochondrial membrane, and the short soluble form (Dynamin-like GTPase OPA1, short form; S-OPA1), which results from proteolytic cleavage and localizes in the intermembrane space. Both forms (L-OPA1 and S-OPA1) cooperate to catalyze the fusion of the mitochondrial inner membrane. The equilibrium between L-OPA1 and S-OPA1 is essential: excess levels of S-OPA1, produced by cleavage by OMA1 following loss of mitochondrial membrane potential, lead to an impaired equilibrium between L-OPA1 and S-OPA1, inhibiting mitochondrial fusion. The balance between L-OPA1 and S-OPA1 also influences cristae shape and morphology. Involved in remodeling cristae and the release of cytochrome c during apoptosis. Proteolytic processing by PARL in response to intrinsic apoptotic signals may lead to disassembly of OPA1 oligomers and release of the caspase activator cytochrome C (CYCS) into the mitochondrial intermembrane space. Acts as a regulator of T-helper Th17 cells, which are characterized by cells with fused mitochondria with tight cristae, by mediating mitochondrial membrane remodeling: OPA1 is required for interleukin-17 (IL-17) production. Its role in mitochondrial morphology is required for mitochondrial genome maintenance. In terms of biological role, constitutes the transmembrane long form (L-OPA1) that plays a central role in mitochondrial inner membrane fusion and cristae morphology. L-OPA1 and the soluble short form (S-OPA1) form higher-order helical assemblies that coordinate the fusion of mitochondrial inner membranes. Inner membrane-anchored L-OPA1 molecules initiate membrane remodeling by recruiting soluble S-OPA1 to rapidly polymerize into a flexible cylindrical scaffold encaging the mitochondrial inner membrane. Once at the membrane surface, the formation of S-OPA1 helices induce bilayer curvature. OPA1 dimerization through the paddle region, which inserts into cardiolipin-containing membrane, promotes GTP hydrolysis and the helical assembly of a flexible OPA1 lattice on the membrane, which drives membrane curvature and mitochondrial fusion. Plays a role in the maintenance and remodeling of mitochondrial cristae, some invaginations of the mitochondrial inner membrane that provide an increase in the surface area. Probably acts by forming helical filaments at the inside of inner membrane tubes with the shape and dimensions of crista junctions. The equilibrium between L-OPA1 and S-OPA1 influences cristae shape and morphology: increased L-OPA1 levels promote cristae stacking and elongated mitochondria, while increased S-OPA1 levels correlated with irregular cristae packing and round mitochondria shape. Its function is as follows. Constitutes the soluble short form (S-OPA1) generated by cleavage by OMA1, which plays a central role in mitochondrial inner membrane fusion and cristae morphology. The transmembrane long form (L-OPA1) and the S-OPA1 form higher-order helical assemblies that coordinate the fusion of mitochondrial inner membranes. Inner membrane-anchored L-OPA1 molecules initiate membrane remodeling by recruiting soluble S-OPA1 to rapidly polymerize into a flexible cylindrical scaffold encaging the mitochondrial inner membrane. Once at the membrane surface, the formation of S-OPA1 helices induce bilayer curvature. OPA1 dimerization through the paddle region, which inserts into cardiolipin-containing membrane, promotes GTP hydrolysis and the helical assembly of a flexible OPA1 lattice on the membrane, which drives membrane curvature and mitochondrial fusion. Excess levels of S-OPA1 produced by cleavage by OMA1 following stress conditions that induce loss of mitochondrial membrane potential, lead to an impaired equilibrium between L-OPA1 and S-OPA1, thereby inhibiting mitochondrial fusion. Involved in mitochondrial safeguard in response to transient mitochondrial membrane depolarization by mediating flickering: cleavage by OMA1 leads to excess production of S-OPA1, preventing mitochondrial hyperfusion. Plays a role in the maintenance and remodeling of mitochondrial cristae, some invaginations of the mitochondrial inner membrane that provide an increase in the surface area. Probably acts by forming helical filaments at the inside of inner membrane tubes with the shape and dimensions of crista junctions. The equilibrium between L-OPA1 and S-OPA1 influences cristae shape and morphology: increased L-OPA1 levels promote cristae stacking and elongated mitochondria, while increased S-OPA1 levels correlated with irregular cristae packing and round mitochondria shape. Functionally, isoforms that contain the alternative exon 4b are required for mitochondrial genome maintenance, possibly by anchoring the mitochondrial nucleoids to the inner mitochondrial membrane. This Mus musculus (Mouse) protein is Dynamin-like GTPase OPA1, mitochondrial.